The following is a 36-amino-acid chain: Photosystem II reaction center protein Y (36 aa).

Topologically, residues 1-4 are lumenal; sequence MDTR. A helical membrane pass occupies residues 5-23; sequence LLVIAAPVLVAASWALFNI. The Stromal portion of the chain corresponds to 24–36; it reads GRLAIQQIQRLSR.

Belongs to the PsbY family. As to quaternary structure, PSII is composed of 1 copy each of membrane proteins PsbA, PsbB, PsbC, PsbD, PsbE, PsbF, PsbH, PsbI, PsbJ, PsbK, PsbL, PsbM, PsbT, PsbX, PsbY, PsbZ, Psb30/Ycf12, at least 3 peripheral proteins of the oxygen-evolving complex and a large number of cofactors. It forms dimeric complexes.

The protein resides in the plastid. Its subcellular location is the chloroplast thylakoid membrane. Loosely associated component of the core of photosystem II (PSII), it is not always seen in crystals. PSII is a light-driven water plastoquinone oxidoreductase, using light energy to abstract electrons from H(2)O, generating a proton gradient subsequently used for ATP formation. The polypeptide is Photosystem II reaction center protein Y (Thalassiosira pseudonana (Marine diatom)).